The primary structure comprises 701 residues: Ribosomal RNA large subunit methyltransferase K/L (701 aa).

A THUMP domain is found at 43-155; it reads LLYKSLMWSR…NNILHIMLDL (113 aa).

This sequence belongs to the methyltransferase superfamily. RlmKL family.

The protein localises to the cytoplasm. It carries out the reaction guanosine(2445) in 23S rRNA + S-adenosyl-L-methionine = N(2)-methylguanosine(2445) in 23S rRNA + S-adenosyl-L-homocysteine + H(+). The catalysed reaction is guanosine(2069) in 23S rRNA + S-adenosyl-L-methionine = N(2)-methylguanosine(2069) in 23S rRNA + S-adenosyl-L-homocysteine + H(+). Functionally, specifically methylates the guanine in position 2445 (m2G2445) and the guanine in position 2069 (m7G2069) of 23S rRNA. This Buchnera aphidicola subsp. Acyrthosiphon pisum (strain APS) (Acyrthosiphon pisum symbiotic bacterium) protein is Ribosomal RNA large subunit methyltransferase K/L.